We begin with the raw amino-acid sequence, 241 residues long: Uridylate kinase (241 aa).

14–17 contributes to the ATP binding site; that stretch reads KASG. Residues 22-27 are involved in allosteric activation by GTP; sequence GDQGFG. G56 contributes to the UMP binding site. The ATP site is built by G57 and R61. UMP-binding positions include D76 and 137 to 144; that span reads TGNPFFTT. The ATP site is built by T164, Q165, Y170, and D173.

The protein belongs to the UMP kinase family. In terms of assembly, homohexamer.

Its subcellular location is the cytoplasm. It catalyses the reaction UMP + ATP = UDP + ADP. The protein operates within pyrimidine metabolism; CTP biosynthesis via de novo pathway; UDP from UMP (UMPK route): step 1/1. With respect to regulation, allosterically activated by GTP. Inhibited by UTP. Catalyzes the reversible phosphorylation of UMP to UDP. The sequence is that of Uridylate kinase from Agrobacterium fabrum (strain C58 / ATCC 33970) (Agrobacterium tumefaciens (strain C58)).